The sequence spans 385 residues: Probable tRNA sulfurtransferase (385 aa).

Residues 65 to 165 form the THUMP domain; the sequence is AILQELFSFL…KEHFLVFTER (101 aa). Residues 183 to 184, 208 to 209, Arg-267, Gly-285, and Gln-294 each bind ATP; these read LL and TF.

This sequence belongs to the ThiI family.

The protein localises to the cytoplasm. The enzyme catalyses [ThiI sulfur-carrier protein]-S-sulfanyl-L-cysteine + a uridine in tRNA + 2 reduced [2Fe-2S]-[ferredoxin] + ATP + H(+) = [ThiI sulfur-carrier protein]-L-cysteine + a 4-thiouridine in tRNA + 2 oxidized [2Fe-2S]-[ferredoxin] + AMP + diphosphate. It catalyses the reaction [ThiS sulfur-carrier protein]-C-terminal Gly-Gly-AMP + S-sulfanyl-L-cysteinyl-[cysteine desulfurase] + AH2 = [ThiS sulfur-carrier protein]-C-terminal-Gly-aminoethanethioate + L-cysteinyl-[cysteine desulfurase] + A + AMP + 2 H(+). The protein operates within cofactor biosynthesis; thiamine diphosphate biosynthesis. In terms of biological role, catalyzes the ATP-dependent transfer of a sulfur to tRNA to produce 4-thiouridine in position 8 of tRNAs, which functions as a near-UV photosensor. Also catalyzes the transfer of sulfur to the sulfur carrier protein ThiS, forming ThiS-thiocarboxylate. This is a step in the synthesis of thiazole, in the thiamine biosynthesis pathway. The sulfur is donated as persulfide by IscS. The chain is Probable tRNA sulfurtransferase from Mycoplasma genitalium (strain ATCC 33530 / DSM 19775 / NCTC 10195 / G37) (Mycoplasmoides genitalium).